Here is an 86-residue protein sequence, read N- to C-terminus: Large ribosomal subunit protein eL20 (86 aa).

Belongs to the eukaryotic ribosomal protein eL20 family. Part of the 50S ribosomal subunit. Binds 23S rRNA.

The sequence is that of Large ribosomal subunit protein eL20 from Sulfolobus acidocaldarius (strain ATCC 33909 / DSM 639 / JCM 8929 / NBRC 15157 / NCIMB 11770).